A 434-amino-acid chain; its full sequence is Ribosomal protein uS12 methylthiotransferase RimO (434 aa).

The 111-residue stretch at 2–112 (AKIGFVSLGC…VLEAVQEVLP (111 aa)) folds into the MTTase N-terminal domain. Residues C11, C47, C76, C142, C146, and C149 each coordinate [4Fe-4S] cluster. Residues 128-365 (LTPRHYAYVK…LEVQARVSLR (238 aa)) form the Radical SAM core domain. The TRAM domain occupies 368–434 (QRFVGKTLEV…DTYDLHGVQA (67 aa)).

The protein belongs to the methylthiotransferase family. RimO subfamily. It depends on [4Fe-4S] cluster as a cofactor.

It is found in the cytoplasm. It carries out the reaction L-aspartate(89)-[ribosomal protein uS12]-hydrogen + (sulfur carrier)-SH + AH2 + 2 S-adenosyl-L-methionine = 3-methylsulfanyl-L-aspartate(89)-[ribosomal protein uS12]-hydrogen + (sulfur carrier)-H + 5'-deoxyadenosine + L-methionine + A + S-adenosyl-L-homocysteine + 2 H(+). Catalyzes the methylthiolation of an aspartic acid residue of ribosomal protein uS12. This chain is Ribosomal protein uS12 methylthiotransferase RimO, found in Thermus thermophilus (strain ATCC BAA-163 / DSM 7039 / HB27).